A 128-amino-acid chain; its full sequence is Large ribosomal subunit protein bL12 (128 aa).

It belongs to the bacterial ribosomal protein bL12 family. As to quaternary structure, homodimer. Part of the ribosomal stalk of the 50S ribosomal subunit. Forms a multimeric L10(L12)X complex, where L10 forms an elongated spine to which 2 to 4 L12 dimers bind in a sequential fashion. Binds GTP-bound translation factors.

Functionally, forms part of the ribosomal stalk which helps the ribosome interact with GTP-bound translation factors. Is thus essential for accurate translation. The polypeptide is Large ribosomal subunit protein bL12 (Synechococcus sp. (strain CC9902)).